Reading from the N-terminus, the 306-residue chain is Uricase (306 aa).

Residues Lys-5 and Thr-65 each act as charge relay system in the active site. Urate contacts are provided by Thr-65, Asp-66, Phe-175, Arg-192, Ile-240, Gln-241, and Asn-267. Positions 281–306 (AKVLREPPRPTGYQQFSMDRSDLEEQ) are disordered.

This sequence belongs to the uricase family.

The catalysed reaction is urate + O2 + H2O = 5-hydroxyisourate + H2O2. The protein operates within purine metabolism; urate degradation; (S)-allantoin from urate: step 1/3. Its function is as follows. Catalyzes the oxidation of uric acid to 5-hydroxyisourate, which is further processed to form (S)-allantoin. The polypeptide is Uricase (Halalkalicoccus jeotgali (strain DSM 18796 / CECT 7217 / JCM 14584 / KCTC 4019 / B3)).